Here is a 278-residue protein sequence, read N- to C-terminus: Putative pyruvate, phosphate dikinase regulatory protein (278 aa).

149–156 (GVSRSSKT) contacts ADP.

It belongs to the pyruvate, phosphate/water dikinase regulatory protein family. PDRP subfamily.

It catalyses the reaction N(tele)-phospho-L-histidyl/L-threonyl-[pyruvate, phosphate dikinase] + ADP = N(tele)-phospho-L-histidyl/O-phospho-L-threonyl-[pyruvate, phosphate dikinase] + AMP + H(+). The catalysed reaction is N(tele)-phospho-L-histidyl/O-phospho-L-threonyl-[pyruvate, phosphate dikinase] + phosphate + H(+) = N(tele)-phospho-L-histidyl/L-threonyl-[pyruvate, phosphate dikinase] + diphosphate. Bifunctional serine/threonine kinase and phosphorylase involved in the regulation of the pyruvate, phosphate dikinase (PPDK) by catalyzing its phosphorylation/dephosphorylation. The polypeptide is Putative pyruvate, phosphate dikinase regulatory protein (Erythrobacter litoralis (strain HTCC2594)).